The following is a 523-amino-acid chain: GMP synthase [glutamine-hydrolyzing] (523 aa).

Positions 9-198 constitute a Glutamine amidotransferase type-1 domain; the sequence is PVLVVDYGAQ…LTEIAGLEQN (190 aa). Catalysis depends on C86, which acts as the Nucleophile. Active-site residues include H172 and E174. The region spanning 199–397 is the GMPS ATP-PPase domain; sequence WTAANIAEEL…LGLPEVIVAR (199 aa). Residue 227–233 coordinates ATP; sequence SGGVDSA.

Homodimer.

The catalysed reaction is XMP + L-glutamine + ATP + H2O = GMP + L-glutamate + AMP + diphosphate + 2 H(+). The protein operates within purine metabolism; GMP biosynthesis; GMP from XMP (L-Gln route): step 1/1. Its function is as follows. Catalyzes the synthesis of GMP from XMP. The polypeptide is GMP synthase [glutamine-hydrolyzing] (Corynebacterium efficiens (strain DSM 44549 / YS-314 / AJ 12310 / JCM 11189 / NBRC 100395)).